A 137-amino-acid chain; its full sequence is Urease subunit beta (137 aa).

The disordered stretch occupies residues 118–137 (IIAEENKVSENANKESGYNR). The span at 126–137 (SENANKESGYNR) shows a compositional bias: polar residues.

It belongs to the urease beta subunit family. As to quaternary structure, heterotrimer of UreA (gamma), UreB (beta) and UreC (alpha) subunits. Three heterotrimers associate to form the active enzyme.

It localises to the cytoplasm. It catalyses the reaction urea + 2 H2O + H(+) = hydrogencarbonate + 2 NH4(+). The protein operates within nitrogen metabolism; urea degradation; CO(2) and NH(3) from urea (urease route): step 1/1. The sequence is that of Urease subunit beta from Staphylococcus xylosus.